Consider the following 716-residue polypeptide: Mitochondrial Rho GTPase 1 (716 aa).

The Cytoplasmic segment spans residues 1–692 (MSPDAIRVVV…VSVDQDDIKH (692 aa)). Residues 3–224 (PDAIRVVVCG…FYLCQRAVTH (222 aa)) form the Miro 1 domain. A disordered region spans residues 58–99 (NDQDHHHHHQSSPSTMKNKRKHNNKRERERERESSINNVQPN). Residues 84 to 91 (ERERERES), 113 to 115 (DTS), and 167 to 170 (NKSD) each bind GTP. An EF-hand 1 domain is found at 240–275 (GAIKPLKRIFWLSDTDQDGYLNFEELSELHKKCFGI). 5 residues coordinate Ca(2+): D253, D255, D257, Y259, and E264. Residues 303-327 (TQTPPQQQHLATSAGTPNGTTTTTS) are disordered. Positions 388–423 (TGYKFFVDLFIKFDKDNDGGLNEDELNTLFRSTPGI) constitute an EF-hand 2 domain. Residues D401, D403, D405, and E412 each coordinate Ca(2+). The 167-residue stretch at 505 to 671 (RNVFNCFIVG…FIQLVDAAKT (167 aa)) folds into the Miro 2 domain. Residues 514–521 (GAPKAGKS), 550–554 (ELRGG), and 620–623 (LKAD) each bind GTP. The helical; Anchor for type IV membrane protein transmembrane segment at 693-713 (IIMTGAAIAVVGLVSIWVLNS) threads the bilayer. Residues 714 to 716 (LRR) lie on the Mitochondrial intermembrane side of the membrane.

This sequence belongs to the mitochondrial Rho GTPase family.

The protein localises to the mitochondrion outer membrane. Its function is as follows. Mitochondrial GTPase involved in mitochondrial trafficking. Probably involved in control of anterograde transport of mitochondria and their subcellular distribution. This is Mitochondrial Rho GTPase 1 (GEM1) from Candida albicans (strain SC5314 / ATCC MYA-2876) (Yeast).